The primary structure comprises 349 residues: MRATSLAASADVPCRKKPLEFDDNIDVECPVLKRVRDEPEPGPTPSLPPASDLSPAVAPATRLGPYILLEREQGNCTYRALHCPTGTEYTCKVYPASEAQAVLAPYARLPTHQHVARPTEVLLGSQLLYTFFTKTHGDLHSLVRSRRGIPEPEAAALFRQMASAVAHCHKHGLILRDLKLRRFVFSNCERTKLVLENLEDACVMTGPDDSLWDKHACPAYVGPEILSSRPSYSGRAADVWSLGVALFTMLAGRYPFQDSEPALLFGKIRRGTFALPEGLSASARCLIRCLLRREPSERLVALGILLHPWLREDCSQVSPPRSDRREMDQVVPDGPQLEEAEEGEVGLYG.

Residues 1–122 are interaction with DDIT3/CHOP; sequence MRATSLAASA…QHVARPTEVL (122 aa). The tract at residues 35–57 is disordered; the sequence is VRDEPEPGPTPSLPPASDLSPAV. The Protein kinase domain occupies 63–310; it reads LGPYILLERE…ALGILLHPWL (248 aa). Residues 317 to 349 form a disordered region; it reads VSPPRSDRREMDQVVPDGPQLEEAEEGEVGLYG. Residues 336–349 are compositionally biased toward acidic residues; sequence QLEEAEEGEVGLYG.

The protein belongs to the protein kinase superfamily. CAMK Ser/Thr protein kinase family. Tribbles subfamily. Interacts with AKT1, AKT2, MAP2K1 and MAP2K7. Interacts with ATF4. Interacts with DDIT3/CHOP and inhibits its interaction with EP300/P300. Interacts with APOBEC3C. Interacts (via N-terminus) with APOBEC3A. Interacts with RELA. Detected only in the lung. Not detected in the heart, brain, spleen, liver, skeletal muscle, kidney and testis.

It localises to the nucleus. In terms of biological role, inactive protein kinase which acts as a regulator of the integrated stress response (ISR), a process for adaptation to various stress. Inhibits the transcriptional activity of DDIT3/CHOP and is involved in DDIT3/CHOP-dependent cell death during ER stress. May play a role in programmed neuronal cell death but does not appear to affect non-neuronal cells. Acts as a negative feedback regulator of the ATF4-dependent transcription during the ISR: while TRIB3 expression is promoted by ATF4, TRIB3 protein interacts with ATF4 and inhibits ATF4 transcription activity. Disrupts insulin signaling by binding directly to Akt kinases and blocking their activation. May bind directly to and mask the 'Thr-308' phosphorylation site in AKT1. Interacts with the NF-kappa-B transactivator p65 RELA and inhibits its phosphorylation and thus its transcriptional activation activity. Interacts with MAPK kinases and regulates activation of MAP kinases. Can inhibit APOBEC3A editing of nuclear DNA. This is Tribbles homolog 3 (Trib3) from Rattus norvegicus (Rat).